A 443-amino-acid polypeptide reads, in one-letter code: Protein king tubby (443 aa).

Disordered regions lie at residues 57–80 (TNGSPGGINSVAMNTSRNHSNNMR) and 98–191 (HELE…EGDV). Over residues 67 to 80 (VAMNTSRNHSNNMR) the composition is skewed to polar residues. Residues 113–128 (QQQQSASHSANSTQSQ) show a composition bias toward low complexity. Residue Ser136 is modified to Phosphoserine. Residues 177–186 (NGTGNGTGGE) are compositionally biased toward gly residues.

It belongs to the TUB family.

The protein resides in the cytoplasm. Its subcellular location is the nucleus. It is found in the cell projection. It localises to the cilium membrane. The protein localises to the rhabdomere. The protein is Protein king tubby of Drosophila sechellia (Fruit fly).